Consider the following 45-residue polypeptide: Toxin Bcs III 15.09 (45 aa).

One can recognise an EGF-like domain in the interval 2–44 (QGTACTGEHAHNFCLNGGTCRHIQSLGEYYCICPEGYTGHRCE). Disulfide bonds link C6–C21, C15–C32, and C34–C43.

The protein resides in the secreted. The protein localises to the nematocyst. Has both toxic and EGF activity. This is Toxin Bcs III 15.09 from Bunodosoma caissarum (Sea anemone).